Here is a 235-residue protein sequence, read N- to C-terminus: Ornithine decarboxylase antizyme 3 (235 aa).

A phosphoserine mark is found at S9 and S12.

This sequence belongs to the ODC antizyme family. Interacts with ODC1 and thereby sterically blocks ODC homodimerization. Interacts with AZIN2; this interaction disrupts the interaction between the antizyme and ODC1. Interacts with GGN. Testis specific.

Its subcellular location is the nucleus. It localises to the cytoplasm. Its function is as follows. Ornithine decarboxylase (ODC) antizyme protein that negatively regulates ODC activity and intracellular polyamine biosynthesis and uptake in response to increased intracellular polyamine levels. Binds to ODC monomers, inhibiting the assembly of the functional ODC homodimers. Does not target the ODC monomers for degradation, which allows a protein synthesis-independent restoration of ODC activity. Stabilizes AZIN2 by interfering with its ubiquitination. Involved in the translocation of AZNI2 from ER-Golgi intermediate compartment (ERGIC) to the cytosol. Probably plays a key role in spermatogenesis by regulating the intracellular concentration of polyamines in haploid germ cells. In Homo sapiens (Human), this protein is Ornithine decarboxylase antizyme 3 (OAZ3).